The following is a 1374-amino-acid chain: MSTEADEGITFSVPPFAPSGFCTIPEGGICRRGGAAAVGEGEEHQLPPPPPGSFWNVESAAAPGIGCPAATSSSSATRGRGSSVGGGSRRTTVAYVINEASQGQLVVAESEALQSLREACETVGATLETLHFGKLDFGETTVLDRFYNADIAVVEMSDAFRQPSLFYHLGVRESFSMANNIILYCDTNSDSLQSLKEIICQKNTMCTGNYTFVPYMITPHNKVYCCDSSFMKGLTELMQPNFELLLGPICLPLVDRFIQLLKVAQASSSQYFRESILNDIRKARNLYTGKELAAELARIRQRVDNIEVLTADIVINLLLSYRDIQDYDSIVKLVETLEKLPTFDLASHHHVKFHYAFALNRRNLPGDRAKALDIMIPMVQSEGQVASDMYCLVGRIYKDMFLDSNFTDTESRDHGASWFKKAFESEPTLQSGINYAVLLLAAGHQFESSFELRKVGVKLSSLLGKKGNLEKLQSYWEVGFFLGASVLANDHMRVIQASEKLFKLKTPAWYLKSIVETILIYKHFVKLTTEQPVAKQELVDFWMDFLVEATKTDVTVVRFPVLILEPTKIYQPSYLSINNEVEEKTISIWHVLPDDKKGIHEWNFSASSVRGVSISKFEERCCFLYVLHNSDDFQIYFCTELHCKKFFEMVNTITEEKGRSTEEGDCESDLLEYDYEYDENGDRVVLGKGTYGIVYAGRDLSNQVRIAIKEIPERDSRYSQPLHEEIALHKHLKHKNIVQYLGSFSENGFIKIFMEQVPGGSLSALLRSKWGPLKDNEQTIGFYTKQILEGLKYLHDNQIVHRDIKGDNVLINTYSGVLKISDFGTSKRLAGINPCTETFTGTLQYMAPEIIDKGPRGYGKAADIWSLGCTIIEMATGKPPFYELGEPQAAMFKVGMFKVHPEIPESMSAEAKAFILKCFEPDPDKRACANDLLVDEFLKVSSKKKKTQPKLSALSAGSNEYLRSISLPVPVLVEDTSSSSEYGSVSPDTELKVDPFSFKTRAKSCGERDVKGIRTLFLGIPDENFEDHSAPPSPEEKDSGFFMLRKDSERRATLHRILTEDQDKIVRNLMESLAQGAEEPKLKWEHITTLIASLREFVRSTDRKIIATTLSKLKLELDFDSHGISQVQVVLFGFQDAVNKVLRNHNIKPHWMFALDSIIRKAVQTAITILVPELRPHFSLASESDTADQEDLDVEDDHEEQPSNQTVRRPQAVIEDAVATSGVSTLSSTVSHDSQSAHRSLNVQLGRMKIETNRLLEELVRKEKELQALLHRAIEEKDQEIKHLKLKSQPIEIPELPVFHLNSSGTNTEDSELTDWLRVNGADEDTISRFLAEDYTLLDVLYYVTRDDLKCLRLRGGMLCTLWKAIIDFRNKQT.

Residues 68–87 are disordered; it reads PAATSSSSATRGRGSSVGGG. Positions 69–81 are enriched in low complexity; it reads AATSSSSATRGRG. Asymmetric dimethylarginine; by PRMT1 occurs at positions 78 and 80. A Phosphoserine; by PIM1 and PKB/AKT1 modification is found at serine 83. The interaction with PPIA/CYPA stretch occupies residues 649 to 1374; the sequence is MVNTITEEKG…AIIDFRNKQT (726 aa). Positions 680 to 938 constitute a Protein kinase domain; sequence NGDRVVLGKG…ANDLLVDEFL (259 aa). ATP is bound by residues 686–694 and lysine 709; that span reads LGKGTYGIV. Tyrosine 718 is subject to Phosphotyrosine. The Proton acceptor role is filled by aspartate 803. Threonine 813 is modified (phosphothreonine; by autocatalysis). A Phosphothreonine; by autocatalysis, MELK and MAP3K6 modification is found at threonine 838. Position 842 is a phosphothreonine; by autocatalysis (threonine 842). Phosphoserine is present on serine 958. Serine 966 is subject to Phosphoserine; by autocatalysis. Phosphoserine occurs at positions 1029 and 1033. The segment at 1182–1209 is disordered; that stretch reads SESDTADQEDLDVEDDHEEQPSNQTVRR. Residues 1185 to 1199 are compositionally biased toward acidic residues; it reads DTADQEDLDVEDDHE. Residues 1245 to 1285 are a coiled coil; the sequence is LGRMKIETNRLLEELVRKEKELQALLHRAIEEKDQEIKHLK.

This sequence belongs to the protein kinase superfamily. STE Ser/Thr protein kinase family. MAP kinase kinase kinase subfamily. As to quaternary structure, homodimer when inactive. Binds both upstream activators and downstream substrates in multimolecular complexes. Part of a cytoplasmic complex made of HIPK1, DAB2IP and MAP3K5 in response to TNF. This complex formation promotes MAP3K5-JNK activation and subsequent apoptosis. Interacts with SOCS1 which recognizes phosphorylation of Tyr-718 and induces MAP3K5/ASK1 degradation in endothelial cells. Interacts with the 14-3-3 family proteins such as YWHAB, YWHAE, YWHAQ, YWHAH, YWHAZ and SFN. Interacts with ARRB2, BIRC2, DAB2IP, IGF1R, MAP3K6/ASK2, PGAM5, PIM1, PPP5C, SOCS1, STUB1, TRAF2, TRAF6 and TXN. Interacts with ERN1 in a TRAF2-dependent manner. Interacts with calcineurin subunit PPP3R1. Interacts with PPM1L. Interacts (via N-terminus) with RAF1 and this interaction inhibits the proapoptotic function of MAP3K5. Interacts with DAB2IP (via N-terminus C2 domain); the interaction occurs in a TNF-alpha-dependent manner. Interacts with DUSP13A; may positively regulate apoptosis. Interacts with DAXX. Interacts with RC3H2. Interacts with PPIA/CYPA. Interacts with PRMT1; the interaction results in MAP3K5 methylation by PRMT1 which inhibits MAP3K5 activation. Interacts with TRAF2; the interaction is inhibited by PRMT1. Interacts with TRIM48. In terms of assembly, (Microbial infection) Interacts with HIV-1 Nef; this interaction inhibits MAP3K5 signaling. It depends on Mg(2+) as a cofactor. Phosphorylated at Thr-838 through autophosphorylation and by MAP3K6/ASK2 which leads to activation. Thr-838 is dephosphorylated by PPP5C. Ser-83 and Ser-1033 are inactivating phosphorylation sites, the former of which is phosphorylated by AKT1. Phosphorylated at Ser-966 which induces association of MAP3K5/ASK1 with the 14-3-3 family proteins and suppresses MAP3K5/ASK1 activity. Calcineurin (CN) dephosphorylates this site. Also dephosphorylated and activated by PGAM5. Phosphorylation at Ser-966 in response to oxidative stress is negatively regulated by PPIA/CYPA. Post-translationally, ubiquitinated. Tumor necrosis factor (TNF) induces TNFR2-dependent ubiquitination, leading to proteasomal degradation. Ubiquitinated by RC3H2 in a TRIM48-dependent manner. In terms of processing, methylation at Arg-78 and Arg-80 by PRMT1 promotes association of MAP3K5 with thioredoxin and negatively regulates MAP3K5 association with TRAF2, inhibiting MAP3K5 activation. Methylation is blocked by ubiquitination of PRMT1 by TRIM48. Abundantly expressed in heart and pancreas.

It localises to the cytoplasm. The protein localises to the endoplasmic reticulum. It carries out the reaction L-seryl-[protein] + ATP = O-phospho-L-seryl-[protein] + ADP + H(+). The enzyme catalyses L-threonyl-[protein] + ATP = O-phospho-L-threonyl-[protein] + ADP + H(+). Its activity is regulated as follows. Activated by various stressors, including oxidative stress, endoplasmic reticulum stress, and calcium overload, as well as by receptor-mediated inflammatory signals, such as the tumor necrosis factor (TNF) and lipopolysaccharide (LPS). Homophilic association of MAP3K5/ASK1 through the C-terminal coiled-coil domains and the heteromeric complex formation of MAP3K5/ASK1 with the reduced form of thioredoxin (TXN), constitutes an inactive form of the kinase. Upon ROS-induced dissociation of TXN from MAP3K5/ASK1, TRAF2 and TRAF6 are reciprocally recruited to MAP3K5/ASK1 and form the active MAP3K5/ASK1 signalosome, in which TRAF2 and TRAF6 appear to facilitate the active configuration of MAP3K5/ASK1. MAP3K5/ASK1 activity is also regulated through several phosphorylation and dephosphorylation events. Thr-838 is an activating phosphorylation site that is autophosphorylated and phosphorylated by MAP3K6/ASK2 and dephosphorylated by PPP5C. Ser-83 and Ser-1033 are inactivating phosphorylation sites, the former of which is phosphorylated by AKT1. Phosphorylation of Ser-966 induces association of MAP3K5/ASK1 with the 14-3-3 family proteins, which suppresses MAP3K5/ASK1 activity. Calcium/calmodulin-activated protein phosphatase calcineurin (PPP3CA) has been shown to directly dephosphorylate this site. SOCS1 binds to ASK1 by recognizing phosphorylation of Tyr-718 and induces MAP3K5/ASK1 degradation in endothelial cells. Also dephosphorylated and activated by PGAM5. Contains an N-terminal autoinhibitory domain. Once activated targeted for proteasomal degradation by RC3H2-mediated ubiquitination. In terms of biological role, serine/threonine kinase which acts as an essential component of the MAP kinase signal transduction pathway. Plays an important role in the cascades of cellular responses evoked by changes in the environment. Mediates signaling for determination of cell fate such as differentiation and survival. Plays a crucial role in the apoptosis signal transduction pathway through mitochondria-dependent caspase activation. MAP3K5/ASK1 is required for the innate immune response, which is essential for host defense against a wide range of pathogens. Mediates signal transduction of various stressors like oxidative stress as well as by receptor-mediated inflammatory signals, such as the tumor necrosis factor (TNF) or lipopolysaccharide (LPS). Once activated, acts as an upstream activator of the MKK/JNK signal transduction cascade and the p38 MAPK signal transduction cascade through the phosphorylation and activation of several MAP kinase kinases like MAP2K4/SEK1, MAP2K3/MKK3, MAP2K6/MKK6 and MAP2K7/MKK7. These MAP2Ks in turn activate p38 MAPKs and c-jun N-terminal kinases (JNKs). Both p38 MAPK and JNKs control the transcription factors activator protein-1 (AP-1). In Homo sapiens (Human), this protein is Mitogen-activated protein kinase kinase kinase 5 (MAP3K5).